A 117-amino-acid polypeptide reads, in one-letter code: Gamma-aminobutyric acid receptor-associated protein-like 2 (117 aa).

The residue at position 24 (lysine 24) is an N6-acetyllysine. A phosphoserine mark is found at serine 39, serine 87, and serine 88. Glycine 116 is lipidated: Phosphatidylethanolamine amidated glycine; alternate. Glycine 116 carries the Phosphatidylserine amidated glycine; alternate lipid modification. Position 117 (phenylalanine 117) is a propeptide, removed in mature form.

The protein belongs to the ATG8 family. Monomer. Interacts with ATG3, ATG7, ATG13 and ULK1. Interacts with TP53INP1 and TP53INP2. Interacts with TBC1D25. Directly interacts with SQSTM1 and BNIP3. Interacts with TECPR2 and PCM1. Interacts with TBC1D5. Interacts with TRIM5. Interacts with MEFV and TRIM21. Interacts with WDFY3. Interacts with UBA5; promoting recruitment of UBA5 to the endoplasmic reticulum membrane. Interacts with GOSR1. Interacts with KBTBD6 and KBTBD7; the interaction is direct. Interacts with reticulophagy regulators RETREG1, RETREG2 and RETREG3. Interacts with IRGM. Interacts with DNM2. Interacts with NCOA4. Interacts with IRGQ. The precursor molecule is cleaved by ATG4 (ATG4A, ATG4B, ATG4C or ATG4D) to expose the glycine at the C-terminus and form the cytosolic form, GABARAPL2-I. The processed form is then activated by APG7L/ATG7, transferred to ATG3 and conjugated to phosphatidylethanolamine (PE) phospholipid to form the membrane-bound form, GABARAPL2-II. During non-canonical autophagy, the processed form is conjugated to phosphatidylserine (PS) phospholipid. ATG4 proteins also mediate the delipidation of PE-conjugated forms required for GABARAPL2 recycling when autophagosomes fuse with lysosomes. In addition, ATG4B and ATG4D mediate delipidation of ATG8 proteins conjugated to PS during non-canonical autophagy. ATG4B constitutes the major protein for proteolytic activation. ATG4D is the main enzyme for delipidation activity. Post-translationally, phosphorylation at Ser-87 and Ser-88 by TBK1 prevents interaction with ATG4 (ATG4A, ATG4B, ATG4C or ATG4D). Phosphorylation by TBK1 on autophagosomes prevents their delipidation by ATG4 and premature removal from nascent autophagosomes. As to expression, ubiquitous. Expressed at high levels in the brain, heart, prostate, ovary, spleen and skeletal muscle. Expressed at very low levels in lung, thymus and small intestine.

Its subcellular location is the cytoplasmic vesicle. The protein localises to the autophagosome. It localises to the endoplasmic reticulum membrane. It is found in the golgi apparatus. Ubiquitin-like modifier involved in intra-Golgi traffic. Modulates intra-Golgi transport through coupling between NSF activity and SNAREs activation. It first stimulates the ATPase activity of NSF which in turn stimulates the association with GOSR1. Involved in autophagy. Plays a role in mitophagy which contributes to regulate mitochondrial quantity and quality by eliminating the mitochondria to a basal level to fulfill cellular energy requirements and preventing excess ROS production. Whereas LC3s are involved in elongation of the phagophore membrane, the GABARAP/GATE-16 subfamily is essential for a later stage in autophagosome maturation. The sequence is that of Gamma-aminobutyric acid receptor-associated protein-like 2 from Bos taurus (Bovine).